The chain runs to 64 residues: Small hydrophobic protein (64 aa).

The tract at residues 6 to 15 (ITIEFSSKFW) is interaction with host BCAP31. A helical membrane pass occupies residues 20–40 (LIHMITTIISLLIIISIMTAI). The tract at residues 38-43 (TAILNK) is interaction with small-molecule inhibitor. N-linked (GlcNAc...) asparagine; by host glycosylation occurs at asparagine 52.

Belongs to the orthopneumovirus small hydrophobic protein family. In terms of assembly, homopentamer forming a funnel-like pore. Interacts with glycoprotein G; this interaction occurs on the surface of virion particles and infected cells. Interacts with host BCAP31 (via C-terminus); this interaction is direct. In terms of processing, four species of SH have been detected in infected cell cytoplasm: a 7.5 kDa non-glycosylated form (SH0), a 13-15 kDa form that contains one or two N-linked carbohydrate side chains of the high-mannose type (SHg), a 21-30 kDa polylactosaminoglycan-modified form of the protein (SHp), and the isoform generated by alternative translational initiation. Of these different forms, SH0 is by far the most abundant protein detected during virus infection. Tyrosine phosphorylated.

The protein localises to the virion membrane. It localises to the host cell membrane. It is found in the host Golgi apparatus membrane. The protein resides in the host endoplasmic reticulum membrane. Channel activity is inhibited by copper. Also inhibited by small-molecule pyronin B. In terms of biological role, viroporin that forms a homopentameric ion channel displaying low ion selectivity. May play a role in virus morphogenesis and pathogenicity at various stages of the viral life cycle. Accumulates at the membrane of the Golgi apparatus in infected cells and may facilitate virus release by modifying the secretory pathway. May enhance host membrane permeability and disrupt cellular ion homeostasis, which can be sensed as damage-associated molecular patterns/danger signals, triggering NLRP3 inflammasome activation and inflammatory immune response. Also inhibits host TNFA-mediated signaling pathway and may delay apoptosis, allowing time for the virus to replicate. The chain is Small hydrophobic protein (SH) from Homo sapiens (Human).